An 80-amino-acid chain; its full sequence is U-actitoxin-Avd9b (80 aa).

The first 20 residues, 1 to 20, serve as a signal peptide directing secretion; that stretch reads MNLKVLAVFVLCAILVVVTA. The propeptide occupies 21 to 39; sequence ERRGTETGGYKKDTLQDLK. The 36-residue stretch at 45–80 folds into the ShKT domain; the sequence is CFDRYREAACTSDNIRLLCKTSAKYQINCKKSCGLC. 3 cysteine pairs are disulfide-bonded: cysteine 45–cysteine 80, cysteine 54–cysteine 73, and cysteine 63–cysteine 77. A crucial for binding to potassium channels region spans residues 68-69; sequence KY.

The protein belongs to the sea anemone type 1 potassium channel toxin family. Type 1b subfamily.

It is found in the secreted. The protein localises to the nematocyst. Functionally, inhibits voltage-gated potassium channels (Kv1/KCNA). The chain is U-actitoxin-Avd9b from Anemonia viridis (Snakelocks anemone).